Consider the following 329-residue polypeptide: Synaptonemal complex central element protein 1 (329 aa).

A disordered region spans residues 1–29 (MATRPQPLGMEPEGSADLLHGPEGARGQY). Coiled-coil stretches lie at residues 54–167 (RIEV…LETL) and 194–294 (KEQL…ILAH). The interval 291 to 329 (ILAHSTQNEEDSSWRMASPKPVEVHEETAQDQERPSSRT) is disordered. Positions 312–329 (VEVHEETAQDQERPSSRT) are enriched in basic and acidic residues.

This sequence belongs to the SYCE family. Homodimer. Found in a complex with SYCP1 and SYCE2. Interacts with SYCP1, SYCE2 and SYCE3. Interacts with SIX6OS1. In terms of tissue distribution, meiotic cells (at protein level). Expressed in the ovary and testis.

It localises to the nucleus. The protein localises to the chromosome. Its function is as follows. Major component of the transverse central element of synaptonemal complexes (SCS), formed between homologous chromosomes during meiotic prophase. Requires SYCP1 in order to be incorporated into the central element. May have a role in the synaptonemal complex assembly, stabilization and recombination. The protein is Synaptonemal complex central element protein 1 (Syce1) of Mus musculus (Mouse).